The sequence spans 90 residues: Small ribosomal subunit protein uS15 (90 aa).

This sequence belongs to the universal ribosomal protein uS15 family. In terms of assembly, part of the 30S ribosomal subunit. Forms a bridge to the 50S subunit in the 70S ribosome, contacting the 23S rRNA.

In terms of biological role, one of the primary rRNA binding proteins, it binds directly to 16S rRNA where it helps nucleate assembly of the platform of the 30S subunit by binding and bridging several RNA helices of the 16S rRNA. Its function is as follows. Forms an intersubunit bridge (bridge B4) with the 23S rRNA of the 50S subunit in the ribosome. This Helicobacter pylori (strain Shi470) protein is Small ribosomal subunit protein uS15.